Reading from the N-terminus, the 263-residue chain is MWELRSASFWRAIFAEFFATLFYVFFGLGSSLRWAPGPLHVLQVAMAFGLALATLVQSVGHISGAHVNPAVTFAFLVGSQMSLLRAFCYMAAQLLGAVAGAAVLYSVTPPAVRGNLALNTLHPAVSVGQATTVEIFLTLQFVLCIFATYDERRNGQLGSVALAVGFSLALGHLFGMYYTGAGMNPARSFAPAILTGNFTNHWVYWVGPIIGGGLGSLLYDFLLFPRLKSISERLSVLKGAKPDVSNGQPEVTGEPVELNTQAL.

The Cytoplasmic segment spans residues 1-9; the sequence is MWELRSASF. A helical transmembrane segment spans residues 10–29; sequence WRAIFAEFFATLFYVFFGLG. The Extracellular portion of the chain corresponds to 30–41; sequence SSLRWAPGPLHV. The helical transmembrane segment at 42–59 threads the bilayer; it reads LQVAMAFGLALATLVQSV. Residues 60 to 61 lie on the Cytoplasmic side of the membrane; it reads GH. An intramembrane region (discontinuously helical) is located at residues 62–77; it reads ISGAHVNPAVTFAFLV. The NPA 1 motif lies at 68 to 70; sequence NPA. The Cytoplasmic portion of the chain corresponds to 78 to 82; it reads GSQMS. A helical transmembrane segment spans residues 83–106; that stretch reads LLRAFCYMAAQLLGAVAGAAVLYS. At 107 to 127 the chain is on the extracellular side; sequence VTPPAVRGNLALNTLHPAVSV. The helical transmembrane segment at 128–148 threads the bilayer; sequence GQATTVEIFLTLQFVLCIFAT. Residues 149–156 are Cytoplasmic-facing; it reads YDERRNGQ. A helical transmembrane segment spans residues 157 to 175; that stretch reads LGSVALAVGFSLALGHLFG. At 176-178 the chain is on the extracellular side; the sequence is MYY. Residues 179 to 193 constitute an intramembrane region (discontinuously helical); sequence TGAGMNPARSFAPAI. Residues 184-186 carry the NPA 2 motif; the sequence is NPA. Residues 194–200 are Extracellular-facing; sequence LTGNFTN. The chain crosses the membrane as a helical span at residues 201–222; that stretch reads HWVYWVGPIIGGGLGSLLYDFL. Topologically, residues 223–263 are cytoplasmic; sequence LFPRLKSISERLSVLKGAKPDVSNGQPEVTGEPVELNTQAL. Residues 227–237 form an interaction with CALM region; sequence LKSISERLSVL. Phosphoserine is present on residues Ser235 and Ser245. A deamidated asparagine; by deterioration mark is found at Asn246 and Asn259.

This sequence belongs to the MIP/aquaporin (TC 1.A.8) family. As to quaternary structure, homotetramer; each monomer provides an independent water pore. Two homotetramers on opposing membranes can dimerize, forming a cell-cell junction. Interacts with CALM; the calcium-calmodulin/CALM complex interacts with the cytoplasmic domains of two aquaporins, leading to channel closure. Interacts with BFSP1 (via C-terminus); prevents calcium-dependent inhibition of the water channel activity. In terms of processing, subject to partial proteolytic cleavage in the eye lens core. Partial proteolysis promotes interactions between tetramers from adjoining membranes. Fatty acylated at Met-1 and Lys-238. The acyl modifications, in decreasing order of ion abundance, are: oleoyl (C18:1) &gt; palmitoyl (C16:0) &gt; stearoyl (C18:0) &gt; eicosenoyl (C20:1) &gt; dihomo-gamma-linolenoyl (C20:3) &gt; palmitoleoyl (C16:1) &gt; eicosadienoyl (C20:2). In terms of tissue distribution, expressed in the cortex and nucleus of the retina lens (at protein level). Major component of lens fiber gap junctions.

The protein resides in the cell membrane. The protein localises to the cell junction. It carries out the reaction H2O(in) = H2O(out). The water channel activity is inhibited by calcium through calmodulin/CALM. Aquaporins form homotetrameric transmembrane channels, with each monomer independently mediating water transport across the plasma membrane along its osmotic gradient. Specifically expressed in lens fiber cells, this aquaporin is crucial for maintaining lens water homeostasis and transparency. Beyond water permeability, it also acts as a cell-to-cell adhesion molecule, forming thin junctions between lens fiber cells that are essential for maintaining the ordered structure and transparency of the lens. The sequence is that of Lens fiber major intrinsic protein from Homo sapiens (Human).